The sequence spans 237 residues: 2',3'-cyclic-nucleotide 3'-phosphodiesterase (237 aa).

The active-site Proton donor/acceptor is the histidine 21. Threonine 23 contacts substrate. Residues 117–137 are disordered; that stretch reads HLYTTDSHGNTVKKKSKQSQD. The Proton donor/acceptor role is filled by histidine 167. The substrate site is built by serine 169 and tyrosine 172.

Belongs to the 2H phosphoesterase superfamily. CPD1 family.

It localises to the golgi apparatus. It carries out the reaction a nucleoside 2',3'-cyclic phosphate + H2O = a nucleoside 2'-phosphate + H(+). Its function is as follows. Involved in the metabolism of ADP-ribose 1',2'-cyclic phosphate which is produced as a consequence of tRNA splicing. This chain is 2',3'-cyclic-nucleotide 3'-phosphodiesterase (CPD1), found in Debaryomyces hansenii (strain ATCC 36239 / CBS 767 / BCRC 21394 / JCM 1990 / NBRC 0083 / IGC 2968) (Yeast).